The primary structure comprises 336 residues: 3-isopropylmalate dehydrogenase (336 aa).

Substrate contacts are provided by Arg87, Arg97, Arg121, and Asp211. 3 residues coordinate Mg(2+): Asp211, Asp235, and Asp239. 271–283 lines the NAD(+) pocket; the sequence is GSAPDIAGQGVAD.

It belongs to the isocitrate and isopropylmalate dehydrogenases family. LeuB type 2 subfamily. Homodimer. Mg(2+) serves as cofactor. Requires Mn(2+) as cofactor.

The protein resides in the cytoplasm. The catalysed reaction is (2R,3S)-3-isopropylmalate + NAD(+) = 4-methyl-2-oxopentanoate + CO2 + NADH. The protein operates within amino-acid biosynthesis; L-leucine biosynthesis; L-leucine from 3-methyl-2-oxobutanoate: step 3/4. Functionally, catalyzes the oxidation of 3-carboxy-2-hydroxy-4-methylpentanoate (3-isopropylmalate) to 3-carboxy-4-methyl-2-oxopentanoate. The product decarboxylates to 4-methyl-2 oxopentanoate. The protein is 3-isopropylmalate dehydrogenase of Mycobacterium avium (strain 104).